Reading from the N-terminus, the 94-residue chain is uncharacterized protein (94 aa).

Transmembrane regions (helical) follow at residues 7-24 (IFFIIVLVGFALFMSFNV) and 39-61 (AVPITLSLLFAFACGALTALLFL). A disordered region spans residues 68–94 (TRKQKREDSPTSAPTGGVSSPEHVDVP).

Its subcellular location is the cell membrane. This is an uncharacterized protein from Treponema pallidum (strain Nichols).